The primary structure comprises 247 residues: V-type proton ATPase subunit D (247 aa).

The protein belongs to the V-ATPase D subunit family. V-ATPase is a heteromultimeric enzyme made up of two complexes: the ATP-hydrolytic V1 complex and the proton translocation V0 complex. The V1 complex consists of three catalytic AB heterodimers that form a heterohexamer, three peripheral stalks each consisting of EG heterodimers, one central rotor including subunits D and F, and the regulatory subunits C and H. The proton translocation complex V0 consists of the proton transport subunit a, a ring of proteolipid subunits c9c'', rotary subunit d, subunits e and f, and the accessory subunits ATP6AP1/Ac45 and ATP6AP2/PRR. Interacts with SNX10.

It is found in the membrane. It localises to the cytoplasmic vesicle. The protein localises to the clathrin-coated vesicle membrane. The protein resides in the cytoplasm. Its subcellular location is the cytoskeleton. It is found in the microtubule organizing center. It localises to the centrosome. The protein localises to the cell projection. The protein resides in the cilium. Subunit of the V1 complex of vacuolar(H+)-ATPase (V-ATPase), a multisubunit enzyme composed of a peripheral complex (V1) that hydrolyzes ATP and a membrane integral complex (V0) that translocates protons. V-ATPase is responsible for acidifying and maintaining the pH of intracellular compartments and in some cell types, is targeted to the plasma membrane, where it is responsible for acidifying the extracellular environment. May play a role in cilium biogenesis through regulation of the transport and the localization of proteins to the cilium. This Oryctolagus cuniculus (Rabbit) protein is V-type proton ATPase subunit D (ATP6V1D).